Consider the following 325-residue polypeptide: Hydroxylase/desaturase poxK (325 aa).

Residues 1–12 (MTATATPVPTVA) show a composition bias toward low complexity. The interval 1-25 (MTATATPVPTVASHAQDITLPPPPK) is disordered.

Belongs to the asaB hydroxylase/desaturase family.

It functions in the pathway secondary metabolite biosynthesis. Hydroxylase/desaturase; part of the gene cluster that mediates the biosynthesis of oxaleimides, cytotoxic compounds containing an unusual disubstituted succinimide moiety. The first step of the pathway is provided by the HR-PKS poxF that serves in a new mode of collaborative biosynthesis with the PKS-NRPS poxE, by providing the olefin containing amino acid substrate via the synthesis of an ACP-bound dec-4-enoate. The cytochrome P450 monooxygenase poxM-catalyzed oxidation at the alpha-position creates the enzyme-bound 2-hydroxydec-4-enoyl-ACP thioester, which may be prone to spontaneous hydrolysis to yield 2-hydroxydec-4-enoic acid due to increased electrophilicity of the carbonyl. 2-hydroxydec-4-enoic acid can then be further oxidized by poxM to yield the alpha-ketoacid 2-oxodec-4-enoicacid, which is reductively aminated by the aminotransferase poxL to yield (S,E)-2-aminodec-4-enoic acid. The Hybrid PKS-NRPS synthetase poxE then performs condensation between the octaketide product of its PKS modules and the amino group of (S,E)-2-aminodec-4-enoic acid which is activated and incorporated by the adenylation domain. The resulting aminoacyl product can be cyclized by the Diels-Alderase PoxQ and reductively released by the reductive (R) domain of poxE to yield an aldehyde intermediate. The released aldehyde is then substrate for a Knoevenagel condensation by the hydrolyase poxO followed by an oxidation at the 5-position of the pyrrolidone ring. The presence of the olefin from the amino acid building block allows for migration of the substituted allyl group to occur. This allylic transposition reaction takes place in a conjugate addition, semipinacol-like fashion to yield a succinimide intermediate. Iterative two-electron oxidations of the C7 methyl of the succinimide intermediate to the carboxylic acid can be catalyzed by one of two remaining cytochrome P450 monooxygenasess poxC or poxD to yield oxaleimide A. Subsequent oxidation yields the maleimide scaffold oxaleimide I. Both oxaleimide A and oxaleimide I can undergo oxidative modifications in the decalin ring to yield the series of products oxaleimides B to H. The chain is Hydroxylase/desaturase poxK from Penicillium oxalicum.